A 110-amino-acid chain; its full sequence is Nucleoid-associated protein Mvan_5528 (110 aa).

Belongs to the YbaB/EbfC family. As to quaternary structure, homodimer.

It is found in the cytoplasm. Its subcellular location is the nucleoid. Binds to DNA and alters its conformation. May be involved in regulation of gene expression, nucleoid organization and DNA protection. This chain is Nucleoid-associated protein Mvan_5528, found in Mycolicibacterium vanbaalenii (strain DSM 7251 / JCM 13017 / BCRC 16820 / KCTC 9966 / NRRL B-24157 / PYR-1) (Mycobacterium vanbaalenii).